The following is a 404-amino-acid chain: CD2 homolog (404 aa).

Residues 1 to 16 form the signal peptide; it reads MFITLIFLSYINIVLS. Over 17–225 the chain is Extracellular; it reads NNYWARLNET…QNYFLENIHT (209 aa). N-linked (GlcNAc...) asparagine; by host glycans are attached at residues N24, N87, N92, N96, N122, N139, N167, N193, N200, and N206. 2 disulfide bridges follow: C140–C207 and C147–C190. The helical transmembrane segment at 226–246 threads the bilayer; sequence LFYIIIFIVSGLIASIFISII. At 247–404 the chain is on the cytoplasmic side; it reads TFLSLRKRKK…ISLIHVDRII (158 aa). Residues 260–295 are disordered; the sequence is EIESPPPESNEEEQCQHDDTTSIHEPSPREPLLPKP. Basic and acidic residues predominate over residues 273-287; the sequence is QCQHDDTTSIHEPSP. Repeat copies occupy residues 322–327, 328–333, 334–339, 340–345, 346–351, 352–357, and 358–363. Residues 322–363 are 7 X 6 AA tandem repeats of [KN]-P-C-P-P-P; it reads NPCPPPKPCPPPKPCPPPKPCPPPKPCPPPKPCPPPKPCPPP. Residues 357–388 are compositionally biased toward pro residues; sequence PKPCPPPKPCSSPESYSPPKPLPSIPLLPNIP. The tract at residues 357 to 390 is disordered; sequence PKPCPPPKPCSSPESYSPPKPLPSIPLLPNIPPL.

Belongs to the asfivirus CD2 homolog protein family. As to quaternary structure, both glycosylated and nonglycosylated forms interact (via C-terminus) with the host AP-1 complex. Post-translationally, cleaved into two fragments of 63 kDa and 26 kDa containing respectively the glycosylated N-terminus and the nonglycosylated C-terminus. A full-length 89-kDa glycosylated form also exists.

The protein resides in the host membrane. The protein localises to the virion membrane. Its subcellular location is the host Golgi apparatus. Functionally, may play an immunosuppressive role by inhibiting lymphocyte proliferation and subsequently facilitating viral replication and generalization of infection. Responsible for viral hemadsorption, which may help viral spread. Increases virus replication in the tick vector at the step of virus uptake or replication in the tick gut. May play a role in the host Golgi reorganization to yield viral factories. May play a role in host cell penetration. This chain is CD2 homolog, found in African swine fever virus (isolate Tick/South Africa/Pretoriuskop Pr4/1996) (ASFV).